The primary structure comprises 214 residues: MDAPVLYAELNLAETRGLRCTSAPSLPQDACQGPGWHRVALKLGCAGLIFLLMVLSVLVGFLVQKPLIEKCSVAVQENRTEPTGRSATLECPRDWHPHCDKCLFTSQTSRPWADGLVDCNLKGATLLLIQDEEELRLLQNFSKGKGQQFYIGLKYEEVDKVWKWMNGSILNTNLLQITGKDEENSCALISQTEVFSDSCSSDNHWICQKTLKHV.

Residues 1-42 (MDAPVLYAELNLAETRGLRCTSAPSLPQDACQGPGWHRVALK) lie on the Cytoplasmic side of the membrane. A helical; Signal-anchor for type II membrane protein transmembrane segment spans residues 43-63 (LGCAGLIFLLMVLSVLVGFLV). The Extracellular portion of the chain corresponds to 64-214 (QKPLIEKCSV…WICQKTLKHV (151 aa)). Residues 98-208 (HCDKCLFTSQ…CSSDNHWICQ (111 aa)) enclose the C-type lectin domain. Cystine bridges form between C119–C207 and C186–C199.

It localises to the membrane. In Mus musculus (Mouse), this protein is Killer cell lectin-like receptor subfamily B member 1 (Klrb1).